A 105-amino-acid chain; its full sequence is Small ribosomal subunit protein eS25 (105 aa).

It belongs to the eukaryotic ribosomal protein eS25 family. In terms of assembly, component of the small ribosomal subunit. Mature ribosomes consist of a small (40S) and a large (60S) subunit. The 40S subunit contains about 32 different proteins and 1 molecule of RNA (18S). The 60S subunit contains 45 different proteins and 3 molecules of RNA (25S, 5.8S and 5S).

The protein resides in the cytoplasm. In terms of biological role, component of the ribosome, a large ribonucleoprotein complex responsible for the synthesis of proteins in the cell. The small ribosomal subunit (SSU) binds messenger RNAs (mRNAs) and translates the encoded message by selecting cognate aminoacyl-transfer RNA (tRNA) molecules. The large subunit (LSU) contains the ribosomal catalytic site termed the peptidyl transferase center (PTC), which catalyzes the formation of peptide bonds, thereby polymerizing the amino acids delivered by tRNAs into a polypeptide chain. The nascent polypeptides leave the ribosome through a tunnel in the LSU and interact with protein factors that function in enzymatic processing, targeting, and the membrane insertion of nascent chains at the exit of the ribosomal tunnel. This is Small ribosomal subunit protein eS25 (RPS25B) from Candida albicans (strain SC5314 / ATCC MYA-2876) (Yeast).